The primary structure comprises 430 residues: Putative cytochrome P450 139 (430 aa).

Cys-372 contributes to the heme binding site.

The protein belongs to the cytochrome P450 family. Requires heme as cofactor.

The polypeptide is Putative cytochrome P450 139 (cyp139) (Mycobacterium bovis (strain ATCC BAA-935 / AF2122/97)).